Here is a 115-residue protein sequence, read N- to C-terminus: Superoxide reductase (115 aa).

Fe cation-binding residues include Glu14, His16, His41, His47, Cys102, and His105.

The protein belongs to the desulfoferrodoxin family. In terms of assembly, homotetramer. The cofactor is Fe cation.

The catalysed reaction is reduced [rubredoxin] + superoxide + 2 H(+) = oxidized [rubredoxin] + H2O2. Its function is as follows. Uses electrons from reduced NADP, by way of rubredoxin and an oxidoreductase, to catalyze the reduction of superoxide to hydrogen peroxide. The polypeptide is Superoxide reductase (sorA) (Thermococcus kodakarensis (strain ATCC BAA-918 / JCM 12380 / KOD1) (Pyrococcus kodakaraensis (strain KOD1))).